Here is an 805-residue protein sequence, read N- to C-terminus: Leucine--tRNA ligase (805 aa).

Residues 40-51 (PYPSGAGLHVGH) carry the 'HIGH' region motif. The 'KMSKS' region motif lies at 576–580 (KMSKS). Lys579 lines the ATP pocket.

It belongs to the class-I aminoacyl-tRNA synthetase family.

The protein localises to the cytoplasm. It catalyses the reaction tRNA(Leu) + L-leucine + ATP = L-leucyl-tRNA(Leu) + AMP + diphosphate. The sequence is that of Leucine--tRNA ligase from Brevibacillus brevis (strain 47 / JCM 6285 / NBRC 100599).